Reading from the N-terminus, the 234-residue chain is Ribonuclease HII (234 aa).

The RNase H type-2 domain maps to 16–207 (ALVAGVDEAG…VRRMLTPKAI (192 aa)). A divalent metal cation contacts are provided by aspartate 22, glutamate 23, and aspartate 115.

It belongs to the RNase HII family. The cofactor is Mn(2+). Mg(2+) serves as cofactor.

It is found in the cytoplasm. It carries out the reaction Endonucleolytic cleavage to 5'-phosphomonoester.. In terms of biological role, endonuclease that specifically degrades the RNA of RNA-DNA hybrids. The chain is Ribonuclease HII from Xylella fastidiosa (strain M23).